The sequence spans 419 residues: Gamma-glutamyl phosphate reductase (419 aa).

It belongs to the gamma-glutamyl phosphate reductase family.

It localises to the cytoplasm. It catalyses the reaction L-glutamate 5-semialdehyde + phosphate + NADP(+) = L-glutamyl 5-phosphate + NADPH + H(+). It functions in the pathway amino-acid biosynthesis; L-proline biosynthesis; L-glutamate 5-semialdehyde from L-glutamate: step 2/2. Its function is as follows. Catalyzes the NADPH-dependent reduction of L-glutamate 5-phosphate into L-glutamate 5-semialdehyde and phosphate. The product spontaneously undergoes cyclization to form 1-pyrroline-5-carboxylate. In Gloeobacter violaceus (strain ATCC 29082 / PCC 7421), this protein is Gamma-glutamyl phosphate reductase.